Here is a 384-residue protein sequence, read N- to C-terminus: uncharacterized protein (384 aa).

It to S.pombe SpAC2E11.17.

This is an uncharacterized protein from Schizosaccharomyces pombe (strain 972 / ATCC 24843) (Fission yeast).